A 98-amino-acid chain; its full sequence is NADH-ubiquinone oxidoreductase chain 4L (98 aa).

Helical transmembrane passes span 1 to 21 (MTPV…GLAF), 29 to 49 (ALLC…LWAL), and 59 to 79 (APML…ALLV).

The protein belongs to the complex I subunit 4L family.

It localises to the mitochondrion membrane. It catalyses the reaction a ubiquinone + NADH + 5 H(+)(in) = a ubiquinol + NAD(+) + 4 H(+)(out). Functionally, core subunit of the mitochondrial membrane respiratory chain NADH dehydrogenase (Complex I) which catalyzes electron transfer from NADH through the respiratory chain, using ubiquinone as an electron acceptor. Part of the enzyme membrane arm which is embedded in the lipid bilayer and involved in proton translocation. This Carassius auratus (Goldfish) protein is NADH-ubiquinone oxidoreductase chain 4L (MT-ND4L).